The following is a 494-amino-acid chain: Aspartyl/glutamyl-tRNA(Asn/Gln) amidotransferase subunit B (494 aa).

This sequence belongs to the GatB/GatE family. GatB subfamily. As to quaternary structure, heterotrimer of A, B and C subunits.

It catalyses the reaction L-glutamyl-tRNA(Gln) + L-glutamine + ATP + H2O = L-glutaminyl-tRNA(Gln) + L-glutamate + ADP + phosphate + H(+). The enzyme catalyses L-aspartyl-tRNA(Asn) + L-glutamine + ATP + H2O = L-asparaginyl-tRNA(Asn) + L-glutamate + ADP + phosphate + 2 H(+). In terms of biological role, allows the formation of correctly charged Asn-tRNA(Asn) or Gln-tRNA(Gln) through the transamidation of misacylated Asp-tRNA(Asn) or Glu-tRNA(Gln) in organisms which lack either or both of asparaginyl-tRNA or glutaminyl-tRNA synthetases. The reaction takes place in the presence of glutamine and ATP through an activated phospho-Asp-tRNA(Asn) or phospho-Glu-tRNA(Gln). The sequence is that of Aspartyl/glutamyl-tRNA(Asn/Gln) amidotransferase subunit B from Nitrobacter hamburgensis (strain DSM 10229 / NCIMB 13809 / X14).